The sequence spans 92 residues: Small ribosomal subunit protein uS19c (92 aa).

Belongs to the universal ribosomal protein uS19 family.

The protein resides in the plastid. The protein localises to the cyanelle. In terms of biological role, protein S19 forms a complex with S13 that binds strongly to the 16S ribosomal RNA. The polypeptide is Small ribosomal subunit protein uS19c (rps19) (Cyanophora paradoxa).